Reading from the N-terminus, the 87-residue chain is HssA/B-like protein 7 (87 aa).

Positions 1 to 22 are enriched in polar residues; the sequence is MSILSALTSISNPMKSTKSSVA. Residues 1–23 are disordered; that stretch reads MSILSALTSISNPMKSTKSSVAN.

This sequence belongs to the hssA/B family.

This is HssA/B-like protein 7 (hssl7) from Dictyostelium discoideum (Social amoeba).